The following is a 400-amino-acid chain: Mannitol-1-phosphate 5-dehydrogenase (400 aa).

Residue 12-23 participates in NAD(+) binding; the sequence is AVHFGAGNIGRG. Residue Lys-221 is part of the active site.

This sequence belongs to the mannitol dehydrogenase family. In terms of assembly, monomer.

The catalysed reaction is D-mannitol 1-phosphate + NAD(+) = beta-D-fructose 6-phosphate + NADH + H(+). In terms of biological role, catalyzes the NAD(H)-dependent interconversion of D-fructose 6-phosphate and D-mannitol 1-phosphate in the mannitol metabolic pathway. In Pyricularia oryzae (strain Y34) (Rice blast fungus), this protein is Mannitol-1-phosphate 5-dehydrogenase.